Here is a 229-residue protein sequence, read N- to C-terminus: Putative N-acetylmannosamine-6-phosphate 2-epimerase (229 aa).

The protein belongs to the NanE family.

It carries out the reaction an N-acyl-D-glucosamine 6-phosphate = an N-acyl-D-mannosamine 6-phosphate. Its pathway is amino-sugar metabolism; N-acetylneuraminate degradation; D-fructose 6-phosphate from N-acetylneuraminate: step 3/5. Its function is as follows. Converts N-acetylmannosamine-6-phosphate (ManNAc-6-P) to N-acetylglucosamine-6-phosphate (GlcNAc-6-P). The polypeptide is Putative N-acetylmannosamine-6-phosphate 2-epimerase (Escherichia coli O8 (strain IAI1)).